Consider the following 245-residue polypeptide: MIIPAIDLIEGQVVRLYQGDYAQQTTFDLSPLAQLQAYQAQGATWLHIVDLTGAKDPDRRQTRLIGELVENLEANIQVGGGIRSEAQVKELLDLGVKRVVIGSLAVKQPELVQSWLETYGSDAICLALDVNINQAGEKIVAVSGWQSGGGKTLESLVATFAPYGLKHALVTDISRDGTLQGSNTQLYQEIVARYPDIEWQASGGIATLDDVSAVRNSGASGIIIGKALLINNFTVQEAIACWPNA.

Asp-7 (proton acceptor) is an active-site residue. The active-site Proton donor is Asp-129.

It belongs to the HisA/HisF family.

It is found in the cytoplasm. It carries out the reaction 1-(5-phospho-beta-D-ribosyl)-5-[(5-phospho-beta-D-ribosylamino)methylideneamino]imidazole-4-carboxamide = 5-[(5-phospho-1-deoxy-D-ribulos-1-ylimino)methylamino]-1-(5-phospho-beta-D-ribosyl)imidazole-4-carboxamide. It functions in the pathway amino-acid biosynthesis; L-histidine biosynthesis; L-histidine from 5-phospho-alpha-D-ribose 1-diphosphate: step 4/9. This chain is 1-(5-phosphoribosyl)-5-[(5-phosphoribosylamino)methylideneamino] imidazole-4-carboxamide isomerase, found in Shewanella loihica (strain ATCC BAA-1088 / PV-4).